A 917-amino-acid chain; its full sequence is ABC transporter A family member 12 (917 aa).

A run of 6 helical transmembrane segments spans residues 34-54, 323-343, 377-397, 409-429, 435-455, and 508-528; these read LILVPLFLCLILLAIQQVLDA, IASLLGPLFFTWVVLLLFPVI, FLTISMLYVISLVGFGSAIGL, FVFYFIYSNLQISLAFLVSSI, TVTVIAYILVYGTGLLGSFLF, and GEVFCIMSVEWFLALIVAYYI. Residues 595 to 832 form the ABC transporter domain; sequence ILCDNLKKVY…YGGSYVFTMT (238 aa). An ATP-binding site is contributed by 633-640; it reads GPNGAGKT.

Belongs to the ABC transporter superfamily. ABCA family. CPR flippase (TC 3.A.1.211) subfamily.

The protein resides in the membrane. This Arabidopsis thaliana (Mouse-ear cress) protein is ABC transporter A family member 12 (ABCA12).